The chain runs to 2280 residues: Genome polyprotein (2280 aa).

Positions Glu-454 to Lys-608 constitute an SF3 helicase domain. Residue Gly-480 to Thr-487 participates in ATP binding. Residue Tyr-965 is modified to O-(5'-phospho-RNA)-tyrosine. The 149-residue stretch at Gly-1054–Glu-1202 folds into the Peptidase C24 domain. Active-site for 3CLpro activity residues include His-1084, Glu-1105, and Cys-1169. The region spanning Gly-1442–Phe-1567 is the RdRp catalytic domain. The disordered stretch occupies residues Gly-1722 to Pro-1746. Residues Asn-1723–Pro-1735 are compositionally biased toward polar residues.

In terms of assembly, homodimer. Homomultimer. Specific enzymatic cleavages in vivo yield mature proteins. Pro-Pol is first autocatalytically cleaved, then processes the whole polyprotein. Post-translationally, VPg is uridylylated by the polymerase and is covalently attached to the 5'-end of the polyadenylated genomic and subgenomic RNAs. This uridylylated form acts as a nucleotide-peptide primer for the polymerase.

It is found in the virion. Its subcellular location is the host cytoplasm. The enzyme catalyses a ribonucleoside 5'-triphosphate + H2O = a ribonucleoside 5'-diphosphate + phosphate + H(+). It carries out the reaction RNA(n) + a ribonucleoside 5'-triphosphate = RNA(n+1) + diphosphate. The catalysed reaction is Endopeptidase with a preference for cleavage when the P1 position is occupied by Glu-|-Xaa and the P1' position is occupied by Gly-|-Yaa.. In terms of biological role, together with NTPase and NS4, initiates the formation of the replication complex. Induces the proliferation of the host smooth ER membranes forming long tubular structures. These remodeled membranes probably form the viral factories that contain the replication complex. Functionally, displays NTPase activity, but no helicase activity. Induces the formation of convoluted membranes derived from the host ER. These remodeled membranes probably form the viral factories that contain the replication complex. Together with NS2 and NS4, initiates the formation of the replication complex. Its function is as follows. Probable key protein responsible for the formation of membrane alterations by the virus. Induces the formation of convoluted membranes derived from the host ER. These remodeled membranes probably form the viral factories that contain the replication complex. Together with NS2 and NTPase, initiates the formation of the replication complex. Viral genome-linked protein is covalently linked to the 5'-end of the positive-strand, negative-strand genomic RNAs and subgenomic RNA. Acts as a genome-linked replication primer. May recruit ribosome to viral RNA thereby promoting viral proteins translation. Interacts with host translation initiation complex to allow the translation of viral proteins. In terms of biological role, protease-polymerase p76 processes the polyprotein: Pro-Pol is first released by autocleavage, then all other proteins are cleaved. Cleaves host translation initiation factor eIF4G1, eIF4G2 and PABP1 thereby inducing a shutdown of host protein synthesis. This shutdown may not prevent viral mRNA from being translated since viral Vpg replaces the cap. It is also an RNA-directed RNA polymerase which replicates genomic and antigenomic viral RNA by recognizing specific signals. Also transcribes a subgenomic mRNA by initiating RNA synthesis internally on antigenomic RNA. This sgRNA codes for structural proteins. Catalyzes the covalent attachment VPg with viral RNAs. Functionally, capsid protein self assembles to form an icosahedral capsid with a T=3 symmetry, about 38 nm in diameter, and consisting of 180 capsid proteins. The capsid encapsulate the genomic RNA and VP2 proteins. Attaches virion to target cells, inducing endocytosis of the viral particle. Acidification of the endosome induces conformational change of capsid protein thereby injecting virus genomic RNA into host cytoplasm. This chain is Genome polyprotein, found in Homo sapiens (Human).